We begin with the raw amino-acid sequence, 462 residues long: L-seryl-tRNA(Sec) selenium transferase (462 aa).

An N6-(pyridoxal phosphate)lysine modification is found at K294.

Belongs to the SelA family. As to quaternary structure, homodecamer; pentamer of dimers. Binds only one seryl-tRNA(Sec) per dimer. It depends on pyridoxal 5'-phosphate as a cofactor.

It localises to the cytoplasm. The catalysed reaction is L-seryl-tRNA(Sec) + selenophosphate + H(+) = L-selenocysteinyl-tRNA(Sec) + phosphate. Its pathway is aminoacyl-tRNA biosynthesis; selenocysteinyl-tRNA(Sec) biosynthesis; selenocysteinyl-tRNA(Sec) from L-seryl-tRNA(Sec) (bacterial route): step 1/1. Its function is as follows. Converts seryl-tRNA(Sec) to selenocysteinyl-tRNA(Sec) required for selenoprotein biosynthesis. The polypeptide is L-seryl-tRNA(Sec) selenium transferase (Yersinia enterocolitica serotype O:8 / biotype 1B (strain NCTC 13174 / 8081)).